Reading from the N-terminus, the 404-residue chain is NADH-quinone oxidoreductase subunit D 1 (404 aa).

It belongs to the complex I 49 kDa subunit family. As to quaternary structure, NDH-1 is composed of 14 different subunits. Subunits NuoB, C, D, E, F, and G constitute the peripheral sector of the complex.

Its subcellular location is the cell inner membrane. It carries out the reaction a quinone + NADH + 5 H(+)(in) = a quinol + NAD(+) + 4 H(+)(out). Its function is as follows. NDH-1 shuttles electrons from NADH, via FMN and iron-sulfur (Fe-S) centers, to quinones in the respiratory chain. The immediate electron acceptor for the enzyme in this species is believed to be ubiquinone. Couples the redox reaction to proton translocation (for every two electrons transferred, four hydrogen ions are translocated across the cytoplasmic membrane), and thus conserves the redox energy in a proton gradient. In Sorangium cellulosum (strain So ce56) (Polyangium cellulosum (strain So ce56)), this protein is NADH-quinone oxidoreductase subunit D 1.